The following is a 259-amino-acid chain: 4-hydroxy-tetrahydrodipicolinate reductase (259 aa).

9 to 14 provides a ligand contact to NAD(+); it reads GANGRM. Residue R37 coordinates NADP(+). NAD(+) contacts are provided by residues 92 to 94 and 116 to 119; these read GTT and ASNM. H149 acts as the Proton donor/acceptor in catalysis. H150 contributes to the (S)-2,3,4,5-tetrahydrodipicolinate binding site. Residue K153 is the Proton donor of the active site. Residue 159 to 160 coordinates (S)-2,3,4,5-tetrahydrodipicolinate; that stretch reads GT.

This sequence belongs to the DapB family.

The protein localises to the cytoplasm. The enzyme catalyses (S)-2,3,4,5-tetrahydrodipicolinate + NAD(+) + H2O = (2S,4S)-4-hydroxy-2,3,4,5-tetrahydrodipicolinate + NADH + H(+). The catalysed reaction is (S)-2,3,4,5-tetrahydrodipicolinate + NADP(+) + H2O = (2S,4S)-4-hydroxy-2,3,4,5-tetrahydrodipicolinate + NADPH + H(+). It participates in amino-acid biosynthesis; L-lysine biosynthesis via DAP pathway; (S)-tetrahydrodipicolinate from L-aspartate: step 4/4. Its function is as follows. Catalyzes the conversion of 4-hydroxy-tetrahydrodipicolinate (HTPA) to tetrahydrodipicolinate. The sequence is that of 4-hydroxy-tetrahydrodipicolinate reductase from Desulfovibrio desulfuricans (strain ATCC 27774 / DSM 6949 / MB).